The sequence spans 935 residues: ABC transporter A family member 7 (935 aa).

Transmembrane regions (helical) follow at residues 34-54, 338-358, 392-412, 424-444, 454-474, 483-503, and 528-548; these read LIMI…LFDT, IASL…FPVI, FLTI…AIGL, FVFY…VSSV, ASYI…NFLI, WIIV…YELA, and DDVF…AYYI. The segment at 571-591 is disordered; the sequence is SLRRPSLQRQGSKVSVDMEKP. In terms of domain architecture, ABC transporter spans 613-850; that stretch reads IVCDNLKKVY…YGGSYVFTMT (238 aa). Position 651 to 658 (651 to 658) interacts with ATP; it reads GPNGAGKT.

It belongs to the ABC transporter superfamily. ABCA family. CPR flippase (TC 3.A.1.211) subfamily.

Its subcellular location is the membrane. This Arabidopsis thaliana (Mouse-ear cress) protein is ABC transporter A family member 7 (ABCA7).